Here is a 315-residue protein sequence, read N- to C-terminus: L-lactate dehydrogenase (315 aa).

Valine 14, aspartate 35, and tyrosine 66 together coordinate NAD(+). Residues glutamine 83, arginine 89, and 121 to 124 (NPVD) contribute to the substrate site. Residues 119–121 (VAN) and serine 144 contribute to the NAD(+) site. Residue 149–152 (DTAR) participates in substrate binding. Residue histidine 176 is the Proton acceptor of the active site. Tyrosine 221 is subject to Phosphotyrosine. Threonine 230 is a substrate binding site.

It belongs to the LDH/MDH superfamily. LDH family. As to quaternary structure, homotetramer.

It is found in the cytoplasm. It catalyses the reaction (S)-lactate + NAD(+) = pyruvate + NADH + H(+). The protein operates within fermentation; pyruvate fermentation to lactate; (S)-lactate from pyruvate: step 1/1. In terms of biological role, catalyzes the conversion of lactate to pyruvate. This is L-lactate dehydrogenase from Mesomycoplasma hyopneumoniae (strain 232) (Mycoplasma hyopneumoniae).